A 271-amino-acid chain; its full sequence is Keratin-associated protein 10-5 (271 aa).

A run of 22 repeats spans residues 26 to 30, 51 to 55, 73 to 77, 78 to 82, 88 to 92, 93 to 97, 98 to 102, 110 to 114, 120 to 124, 130 to 134, 135 to 139, 140 to 144, 152 to 156, 162 to 166, 177 to 181, 187 to 191, 199 to 203, 209 to 213, 214 to 218, 233 to 237, 240 to 244, and 251 to 255. Positions 26-255 are 22 X 5 AA repeats of C-C-X(3); sequence CCEPPCGTAP…SYQASCCRPA (230 aa).

The protein belongs to the KRTAP type 10 family. In terms of assembly, interacts with hair keratins. Restricted to a narrow region of the hair fiber cuticle, lying approximately 20 cell layers above the apex of the dermal papilla of the hair root; not detected in any other tissues.

Functionally, in the hair cortex, hair keratin intermediate filaments are embedded in an interfilamentous matrix, consisting of hair keratin-associated proteins (KRTAP), which are essential for the formation of a rigid and resistant hair shaft through their extensive disulfide bond cross-linking with abundant cysteine residues of hair keratins. The matrix proteins include the high-sulfur and high-glycine-tyrosine keratins. This is Keratin-associated protein 10-5 (KRTAP10-5) from Homo sapiens (Human).